A 470-amino-acid polypeptide reads, in one-letter code: Calmodulin-binding receptor-like cytoplasmic kinase 1 (470 aa).

Disordered stretches follow at residues 1 to 29 (MPMR…SWTD) and 65 to 128 (PTEC…SKSW). Residues 65 to 82 (PTECRSDPGESSTHDRES) show a composition bias toward basic and acidic residues. Polar residues-rich tracts occupy residues 83–98 (TLSG…SFGR) and 108–121 (YRFS…PGKD). A Protein kinase domain is found at 147–423 (FSSVHQIGEG…MKGIAEKLWA (277 aa)). Residues 153–161 (IGEGGFGTV) and Lys175 contribute to the ATP site. A caM-binding region spans residues 162–185 (FKGKLDDGTIVAIKRARKNNYGKS). The active-site Proton acceptor is Asp273. A phosphoserine mark is found at Ser277 and Ser308. The residue at position 309 (Thr309) is a Phosphothreonine. The residue at position 322 (Tyr322) is a Phosphotyrosine.

It belongs to the protein kinase superfamily. Ser/Thr protein kinase family. As to quaternary structure, interacts with calmodulin (CaM) in a Ca(2+)-dependent manner. The cofactor is Mg(2+). In terms of processing, autophosphorylated.

It localises to the cytoplasm. The enzyme catalyses L-seryl-[protein] + ATP = O-phospho-L-seryl-[protein] + ADP + H(+). It catalyses the reaction L-threonyl-[protein] + ATP = O-phospho-L-threonyl-[protein] + ADP + H(+). Its activity is regulated as follows. Up-regulated by Ca(2+)/CaM. The polypeptide is Calmodulin-binding receptor-like cytoplasmic kinase 1 (CRCK1) (Arabidopsis thaliana (Mouse-ear cress)).